The chain runs to 614 residues: Phosphomethylpyrimidine synthase (614 aa).

Substrate contacts are provided by residues Asn226, Met255, Tyr284, His320, 340–342 (SRG), 381–384 (DGLR), and Glu420. Residue His424 coordinates Zn(2+). Tyr447 contributes to the substrate binding site. Residue His488 participates in Zn(2+) binding. 3 residues coordinate [4Fe-4S] cluster: Cys568, Cys571, and Cys576.

This sequence belongs to the ThiC family. As to quaternary structure, homodimer. [4Fe-4S] cluster serves as cofactor.

It catalyses the reaction 5-amino-1-(5-phospho-beta-D-ribosyl)imidazole + S-adenosyl-L-methionine = 4-amino-2-methyl-5-(phosphooxymethyl)pyrimidine + CO + 5'-deoxyadenosine + formate + L-methionine + 3 H(+). It functions in the pathway cofactor biosynthesis; thiamine diphosphate biosynthesis. Catalyzes the synthesis of the hydroxymethylpyrimidine phosphate (HMP-P) moiety of thiamine from aminoimidazole ribotide (AIR) in a radical S-adenosyl-L-methionine (SAM)-dependent reaction. The chain is Phosphomethylpyrimidine synthase from Acidovorax sp. (strain JS42).